Reading from the N-terminus, the 276-residue chain is UPF0328 protein ECU01_0090/ECU01_1520/ECU02_1550/ECU08_0020 (276 aa).

The tract at residues 1–24 (MGIIDVQRSHLTATPSKERDAPAH) is disordered.

It belongs to the UPF0328 family.

The sequence is that of UPF0328 protein ECU01_0090/ECU01_1520/ECU02_1550/ECU08_0020 from Encephalitozoon cuniculi (strain GB-M1) (Microsporidian parasite).